Consider the following 273-residue polypeptide: Putative carboxypeptidase YodJ (273 aa).

An N-terminal signal peptide occupies residues 1–23 (MKKSGKWFSLAAALSVTAIVGAG). The N-palmitoyl cysteine moiety is linked to residue C24. C24 is lipidated: S-diacylglycerol cysteine. Positions 27 to 58 (SNGDAQKDTKTTAETKQTEQKTADSKKSNTQN) are disordered. Residues 31-53 (AQKDTKTTAETKQTEQKTADSKK) are compositionally biased toward basic and acidic residues.

Belongs to the peptidase M15B family.

The protein resides in the cell membrane. This chain is Putative carboxypeptidase YodJ (yodJ), found in Bacillus subtilis (strain 168).